Reading from the N-terminus, the 185-residue chain is Ribosome-recycling factor (185 aa).

Belongs to the RRF family.

Its subcellular location is the cytoplasm. Its function is as follows. Responsible for the release of ribosomes from messenger RNA at the termination of protein biosynthesis. May increase the efficiency of translation by recycling ribosomes from one round of translation to another. The protein is Ribosome-recycling factor of Campylobacter jejuni subsp. jejuni serotype O:23/36 (strain 81-176).